The following is a 297-amino-acid chain: Aspartate carbamoyltransferase catalytic subunit (297 aa).

Positions 49 and 50 each coordinate carbamoyl phosphate. Lys77 lines the L-aspartate pocket. Residues Arg99, His129, and Gln132 each coordinate carbamoyl phosphate. L-aspartate contacts are provided by Arg162 and Arg215. The carbamoyl phosphate site is built by Gly256 and Pro257.

This sequence belongs to the aspartate/ornithine carbamoyltransferase superfamily. ATCase family. In terms of assembly, heterododecamer (2C3:3R2) of six catalytic PyrB chains organized as two trimers (C3), and six regulatory PyrI chains organized as three dimers (R2).

It catalyses the reaction carbamoyl phosphate + L-aspartate = N-carbamoyl-L-aspartate + phosphate + H(+). Its pathway is pyrimidine metabolism; UMP biosynthesis via de novo pathway; (S)-dihydroorotate from bicarbonate: step 2/3. Functionally, catalyzes the condensation of carbamoyl phosphate and aspartate to form carbamoyl aspartate and inorganic phosphate, the committed step in the de novo pyrimidine nucleotide biosynthesis pathway. In Legionella pneumophila subsp. pneumophila (strain Philadelphia 1 / ATCC 33152 / DSM 7513), this protein is Aspartate carbamoyltransferase catalytic subunit.